The following is a 134-amino-acid chain: (R)-specific enoyl-CoA hydratase (134 aa).

The MaoC-like domain maps to 5-119 (SLEVGQKARL…ATLTTRIFTQ (115 aa)). A (3R)-3-hydroxyacyl-CoA is bound by residues 32–37 (DFNPLH), G55, and F84.

Homodimer.

It catalyses the reaction a (3R)-3-hydroxyacyl-CoA = a (2E)-enoyl-CoA + H2O. In terms of biological role, catalyzes the hydration of trans-2-enoyl-CoA with a chain-length of 4-6 carbon atoms, forming the corresponding (3R)-3-hydroxyacyl-CoA. The protein is (R)-specific enoyl-CoA hydratase (phaJ) of Aeromonas caviae (Aeromonas punctata).